A 332-amino-acid chain; its full sequence is RNA polymerase sigma-B factor (332 aa).

The Polymerase core binding motif lies at 125–138 (DLIQEGALGLERGV). The segment at residues 294 to 313 (LVQISQRMGISRERVRQVEK) is a DNA-binding region (H-T-H motif).

It belongs to the sigma-70 factor family.

In terms of biological role, sigma factors are initiation factors that promote the attachment of RNA polymerase to specific initiation sites and are then released. The chain is RNA polymerase sigma-B factor (sigB) from Nostoc sp. (strain PCC 7120 / SAG 25.82 / UTEX 2576).